A 1165-amino-acid polypeptide reads, in one-letter code: Leptin receptor (1165 aa).

The N-terminal stretch at 1 to 21 (MTCPKFSVALLHWEFIYVITA) is a signal peptide. At 22-838 (FDLAYPITPW…TQDGEKHRND (817 aa)) the chain is on the extracellular side. Disulfide bonds link C37–C90, C89–C99, C131–C142, C186–C196, and C188–C193. Residues N41, N55, N72, N80, and N98 are each glycosylated (N-linked (GlcNAc...) asparagine). The N-linked (GlcNAc...) asparagine glycan is linked to N187. 4 N-linked (GlcNAc...) asparagine glycosylation sites follow: N206, N276, N347, and N397. A Fibronectin type-III 1 domain is found at 239 to 332 (PPLGLHMEIT…STPFTFTTQD (94 aa)). Disulfide bonds link C352-C412 and C413-C418. Residue N433 is glycosylated (N-linked (GlcNAc...) asparagine). 3 disulfides stabilise this stretch: C436–C447, C473–C528, and C488–C498. The interval 467 to 484 (HRSSLYCSDVPSVHPISE) is leptin-binding. Fibronectin type-III domains follow at residues 539–634 (PPSS…TVVT), 642–736 (GPEF…WPMS), and 740–834 (IVQS…DGEK). The short motif at 622-626 (WSNWS) is the WSXWS motif element. N-linked (GlcNAc...) asparagine glycans are attached at residues N624, N659, N670, N697, N728, and N750. Residues 839–861 (AGLYVIVPIIISSSILLLGTLLM) form a helical membrane-spanning segment. Over 862-1165 (SHQRMKKLFW…MENKMYDLTV (304 aa)) the chain is Cytoplasmic. The Box 1 motif motif lies at 870–878 (FWEDVPNPK). Position 881 is a phosphoserine (S881). A required for JAK2 activation region spans residues 892-897 (ETFEHL). Positions 897–905 (LFIKHTESV) are required for STAT3 phosphorylation. Y986 carries the post-translational modification Phosphotyrosine; by JAK2. At Y1079 the chain carries Phosphotyrosine. Y1141 carries the phosphotyrosine; by JAK2 modification.

It belongs to the type I cytokine receptor family. Type 2 subfamily. In terms of assembly, present as a mixture of monomers and dimers. The phosphorylated receptor binds a number of SH2 domain-containing proteins such as JAK2, STAT3, PTPN11, and SOCS3. Interaction with SOCS3 inhibits JAK/STAT signaling and MAPK cascade. Post-translationally, on ligand binding, phosphorylated on two conserved C-terminal tyrosine residues by JAK2. Tyr-986 is required for complete binding and activation of PTPN11, ERK/FOS activation,for interaction with SOCS3 and SOCS3 mediated inhibition of leptin signaling. Phosphorylation on Tyr-1141 is required for STAT3 binding/activation. Phosphorylation of Tyr-1079 has a more accessory role. As to expression, kidney, liver, spleen, lung, brain, testis, uterus, ovary, corpus luteum, theca and granulosa cells.

It is found in the cell membrane. Its subcellular location is the basolateral cell membrane. Receptor for hormone LEP/leptin. On ligand binding, mediates LEP central and peripheral effects through the activation of different signaling pathways such as JAK2/STAT3 and MAPK cascade/FOS. In the hypothalamus, LEP acts as an appetite-regulating factor that induces a decrease in food intake and an increase in energy consumption by inducing anorexinogenic factors and suppressing orexigenic neuropeptides, also regulates bone mass and secretion of hypothalamo-pituitary-adrenal hormones. In the periphery, increases basal metabolism, influences reproductive function, regulates pancreatic beta-cell function and insulin secretion, is pro-angiogenic and affects innate and adaptive immunity. Control of energy homeostasis and melanocortin production (stimulation of POMC and full repression of AgRP transcription) is mediated by STAT3 signaling, whereas distinct signals regulate NPY and the control of fertility, growth and glucose homeostasis. Involved in the regulation of counter-regulatory response to hypoglycemia by inhibiting neurons of the parabrachial nucleus. Has a specific effect on T lymphocyte responses, differentially regulating the proliferation of naive and memory T-cells. Leptin increases Th1 and suppresses Th2 cytokine production. This Sus scrofa (Pig) protein is Leptin receptor (LEPR).